Consider the following 627-residue polypeptide: Glyco-Gag protein (627 aa).

The Cytoplasmic segment spans residues 1–63 (LGDVPRTSGA…FLLSVWNRSR (63 aa)). The chain crosses the membrane as a helical span at residues 64–86 (AARLVCCSIVLCCLCLTVFLYLS). The Extracellular segment spans residues 87 to 627 (ENMGQTVTTP…PQASLLTLDD (541 aa)). The N-linked (GlcNAc...) asparagine; by host glycan is linked to Asn-113. The span at 199–215 (PPSAPSLPPEPPFPTPP) shows a compositional bias: pro residues. Disordered regions lie at residues 199–310 (PPSA…RQGG) and 523–627 (RETP…TLDD). Composition is skewed to basic and acidic residues over residues 523-555 (RETPEEREERIRRETEEKEERRRAEDEQREKER) and 575-608 (RQDRQGGERRRPQLDHDQCAYCKEKGHWARDCPK). The CCHC-type zinc finger occupies 593–608 (CAYCKEKGHWARDCPK).

Post-translationally, glycosylated by host. In terms of processing, cleaved by host near the middle of the molecule, releasing the c-terminal half containing capsid and nucleoprotein domains op GAG.

The protein resides in the host cell membrane. Plays a role in viral particle release. Presumably acts by facilitating the fission of the virion bud at the cell surface. May prevent the antiviral activity of murine APOBEC3. This chain is Glyco-Gag protein, found in Friend murine leukemia virus (isolate 57) (FrMLV).